We begin with the raw amino-acid sequence, 472 residues long: Dihydrolipoyl dehydrogenase 2 (472 aa).

FAD-binding positions include 39–47 (ERDAYGGTC), lysine 56, and alanine 118. Cysteines 47 and 52 form a disulfide. NAD(+) contacts are provided by residues 186–190 (GAGYI), glutamate 209, and 275–278 (AVGR). FAD contacts are provided by aspartate 318 and alanine 326. Histidine 450 acts as the Proton acceptor in catalysis.

This sequence belongs to the class-I pyridine nucleotide-disulfide oxidoreductase family. As to quaternary structure, homodimer. FAD serves as cofactor.

Its subcellular location is the cytoplasm. The catalysed reaction is N(6)-[(R)-dihydrolipoyl]-L-lysyl-[protein] + NAD(+) = N(6)-[(R)-lipoyl]-L-lysyl-[protein] + NADH + H(+). The polypeptide is Dihydrolipoyl dehydrogenase 2 (lpdA2) (Haloarcula marismortui (strain ATCC 43049 / DSM 3752 / JCM 8966 / VKM B-1809) (Halobacterium marismortui)).